A 512-amino-acid chain; its full sequence is Cobyric acid synthase (512 aa).

Residues 251 to 451 (ALDIAVIRLP…IHGLFDSHHF (201 aa)) form the GATase cobBQ-type domain. The active-site Nucleophile is C332. The active site involves H443.

It belongs to the CobB/CobQ family. CobQ subfamily.

It participates in cofactor biosynthesis; adenosylcobalamin biosynthesis. Functionally, catalyzes amidations at positions B, D, E, and G on adenosylcobyrinic A,C-diamide. NH(2) groups are provided by glutamine, and one molecule of ATP is hydrogenolyzed for each amidation. The chain is Cobyric acid synthase from Yersinia enterocolitica serotype O:8 / biotype 1B (strain NCTC 13174 / 8081).